A 171-amino-acid chain; its full sequence is uncharacterized protein (171 aa).

This is an uncharacterized protein from Aedes vexans (Inland floodwater mosquito).